Here is a 434-residue protein sequence, read N- to C-terminus: Glutamate-1-semialdehyde 2,1-aminomutase (434 aa).

An N6-(pyridoxal phosphate)lysine modification is found at Lys266.

This sequence belongs to the class-III pyridoxal-phosphate-dependent aminotransferase family. HemL subfamily. Homodimer. Pyridoxal 5'-phosphate is required as a cofactor.

It is found in the cytoplasm. It catalyses the reaction (S)-4-amino-5-oxopentanoate = 5-aminolevulinate. The protein operates within porphyrin-containing compound metabolism; protoporphyrin-IX biosynthesis; 5-aminolevulinate from L-glutamyl-tRNA(Glu): step 2/2. The protein is Glutamate-1-semialdehyde 2,1-aminomutase of Fusobacterium nucleatum subsp. nucleatum (strain ATCC 25586 / DSM 15643 / BCRC 10681 / CIP 101130 / JCM 8532 / KCTC 2640 / LMG 13131 / VPI 4355).